A 612-amino-acid chain; its full sequence is Zinc metalloproteinase-disintegrin-like 2a (612 aa).

The signal sequence occupies residues 1–20; sequence MIQVLLVTICLAVFPYQGSS. The propeptide occupies 21-189; the sequence is IILGSGNVND…KKASQLNLTP (169 aa). In terms of domain architecture, Peptidase M12B spans 199–395; it reads KYIELVIVAD…NRPPCILNKP (197 aa). Ca(2+) is bound at residue Glu202. A glycan (N-linked (GlcNAc...) asparagine) is linked at Asn218. Position 286 (Asp286) interacts with Ca(2+). Disulfide bonds link Cys310–Cys390, Cys350–Cys374, and Cys352–Cys357. Residue His335 participates in Zn(2+) binding. Glu336 is a catalytic residue. Residues His339 and His345 each coordinate Zn(2+). Ca(2+) contacts are provided by Cys390, Asn393, Val405, Asn408, Phe410, Glu412, Glu415, and Asp418. One can recognise a Disintegrin domain in the interval 403–489; the sequence is PPVCGNYFVE…DCPTDNFQRN (87 aa). 14 disulfides stabilise this stretch: Cys406-Cys435, Cys417-Cys430, Cys419-Cys425, Cys429-Cys452, Cys443-Cys449, Cys448-Cys474, Cys461-Cys481, Cys468-Cys500, Cys493-Cys505, Cys512-Cys562, Cys527-Cys573, Cys540-Cys550, Cys557-Cys599, and Cys593-Cys605. The D/ECD-tripeptide signature appears at 467-469; the sequence is ECD.

Belongs to the venom metalloproteinase (M12B) family. P-III subfamily. The cofactor is Zn(2+). In terms of tissue distribution, expressed by the venom gland.

The protein resides in the secreted. In terms of biological role, snake venom metalloproteinase that impairs hemostasis in the envenomed animal. The protein is Zinc metalloproteinase-disintegrin-like 2a of Crotalus adamanteus (Eastern diamondback rattlesnake).